The following is a 27-amino-acid chain: Secretin (27 aa).

Val27 carries the post-translational modification Valine amide.

It belongs to the glucagon family.

Its subcellular location is the secreted. Functionally, hormone involved in different processes, such as regulation of the pH of the duodenal content, food intake and water homeostasis. Exerts its biological effects by binding to secretin receptor (SCTR), a G-protein coupled receptor expressed in the basolateral domain of several cells. Acts as a key gastrointestinal hormone by regulating the pH of the duodenal content. Secreted by S cells of the duodenum in the crypts of Lieberkuehn and regulates the pH of the duodenum by (1) inhibiting the secretion of gastric acid from the parietal cells of the stomach and (2) stimulating the production of bicarbonate (NaHCO(3)) from the ductal cells of the pancreas. Production of bicarbonate is essential to neutralize the pH and ensure no damage is done to the small intestine by the gastric acid. In addition to regulating the pH of the duodenal content, plays a central role in diet induced thermogenesis: acts as a non-sympathetic brown fat (BAT) activator mediating prandial thermogenesis, which consequentially induces satiation. Mechanistically, secretin released by the gut after a meal binds to secretin receptor (SCTR) in brown adipocytes, activating brown fat thermogenesis by stimulating lipolysis, which is sensed in the brain and promotes satiation. Also able to stimulate lipolysis in white adipocytes. Also plays an important role in cellular osmoregulation: released into the systemic circulation in response to hyperosmolality and acts at different levels in the hypothalamus, pituitary and kidney to regulate water homeostasis. Also plays a role in the central nervous system, possibly by acting as a neuropeptide hormone: required for hippocampal synaptic function and neural progenitor cells maintenance. This chain is Secretin, found in Bos taurus (Bovine).